Consider the following 565-residue polypeptide: UvrABC system protein C (565 aa).

A GIY-YIG domain is found at 12-89; the sequence is EEPGVYIFKN…IRTHKPKYNV (78 aa). One can recognise a UVR domain in the interval 195–230; sequence KDVLPTLYEKIEQYASNLAFEKAAFLRDQVLVLQNI.

It belongs to the UvrC family. In terms of assembly, interacts with UvrB in an incision complex.

Its subcellular location is the cytoplasm. Its function is as follows. The UvrABC repair system catalyzes the recognition and processing of DNA lesions. UvrC both incises the 5' and 3' sides of the lesion. The N-terminal half is responsible for the 3' incision and the C-terminal half is responsible for the 5' incision. This is UvrABC system protein C from Hydrogenobaculum sp. (strain Y04AAS1).